The primary structure comprises 494 residues: V-type proton ATPase subunit B (494 aa).

R384 serves as a coordination point for ATP.

It belongs to the ATPase alpha/beta chains family. In terms of assembly, V-ATPase is a heteromultimeric enzyme made up of two complexes: the ATP-hydrolytic V1 complex and the proton translocation V0 complex. The V1 complex consists of three catalytic AB heterodimers that form a heterohexamer, three peripheral stalks each consisting of EG heterodimers, one central rotor including subunits D and F, and the regulatory subunits C and H. The proton translocation complex V0 consists of the proton transport subunit a, a ring of proteolipid subunits c9c'', rotary subunit d, subunits e and f, and the accessory subunits VhaAC45 and ATP6AP2.

Its function is as follows. Non-catalytic subunit of the V1 complex of vacuolar(H+)-ATPase (V-ATPase), a multisubunit enzyme composed of a peripheral complex (V1) that hydrolyzes ATP and a membrane integral complex (V0) that translocates protons. V-ATPase is responsible for acidifying and maintaining the pH of intracellular compartments and in some cell types, is targeted to the plasma membrane, where it is responsible for acidifying the extracellular environment. Essential for the proper assembly and activity of V-ATPase. This is V-type proton ATPase subunit B (VHA55) from Manduca sexta (Tobacco hawkmoth).